A 238-amino-acid chain; its full sequence is Probable xyloglucan-specific endo-beta-1,4-glucanase A (238 aa).

An N-terminal signal peptide occupies residues 1–18 (MKFSLSVALSLAAATAQA). 2 N-linked (GlcNAc...) asparagine glycosylation sites follow: N106 and N171.

Belongs to the glycosyl hydrolase 12 (cellulase H) family.

It is found in the secreted. It carries out the reaction xyloglucan + H2O = xyloglucan oligosaccharides.. Its function is as follows. Catalyzes endohydrolysis of 1,4-beta-D-glucosidic linkages in xyloglucan with retention of the beta-configuration of the glycosyl residues. Specific for xyloglucan and does not hydrolyze other cell wall components. The polypeptide is Probable xyloglucan-specific endo-beta-1,4-glucanase A (xgeA) (Neosartorya fischeri (strain ATCC 1020 / DSM 3700 / CBS 544.65 / FGSC A1164 / JCM 1740 / NRRL 181 / WB 181) (Aspergillus fischerianus)).